The sequence spans 594 residues: UvrABC system protein C (594 aa).

In terms of domain architecture, GIY-YIG spans 14–91 (DQPGCYLMKD…IKKYDPKYNI (78 aa)). Residues 196–231 (KEVRSELEIKMYEASEKLEFERAKELRDQIAHIDAI) enclose the UVR domain.

Belongs to the UvrC family. In terms of assembly, interacts with UvrB in an incision complex.

The protein localises to the cytoplasm. Functionally, the UvrABC repair system catalyzes the recognition and processing of DNA lesions. UvrC both incises the 5' and 3' sides of the lesion. The N-terminal half is responsible for the 3' incision and the C-terminal half is responsible for the 5' incision. This Bacillus cereus (strain G9842) protein is UvrABC system protein C.